The sequence spans 228 residues: 7-cyano-7-deazaguanine synthase (228 aa).

Residue 16 to 26 (FSGGQDSTTCL) participates in ATP binding. Zn(2+) is bound by residues Cys195, Cys203, Cys206, and Cys209.

The protein belongs to the QueC family. Zn(2+) serves as cofactor.

It carries out the reaction 7-carboxy-7-deazaguanine + NH4(+) + ATP = 7-cyano-7-deazaguanine + ADP + phosphate + H2O + H(+). The protein operates within purine metabolism; 7-cyano-7-deazaguanine biosynthesis. In terms of biological role, catalyzes the ATP-dependent conversion of 7-carboxy-7-deazaguanine (CDG) to 7-cyano-7-deazaguanine (preQ(0)). This chain is 7-cyano-7-deazaguanine synthase, found in Haemophilus influenzae (strain ATCC 51907 / DSM 11121 / KW20 / Rd).